The following is a 968-amino-acid chain: RNA polymerase-associated protein RapA (968 aa).

Residues 164-334 (DVGRRHAPRV…FARLRLLDPN (171 aa)) form the Helicase ATP-binding domain. Residue 177 to 184 (DEVGLGKT) coordinates ATP. A DEAH box motif is present at residues 280–283 (DEAH). Positions 490–685 (RVEWLMGYLT…ALKAQLEQGR (196 aa)) constitute a Helicase C-terminal domain.

The protein belongs to the SNF2/RAD54 helicase family. RapA subfamily. In terms of assembly, interacts with the RNAP. Has a higher affinity for the core RNAP than for the holoenzyme. Its ATPase activity is stimulated by binding to RNAP.

Transcription regulator that activates transcription by stimulating RNA polymerase (RNAP) recycling in case of stress conditions such as supercoiled DNA or high salt concentrations. Probably acts by releasing the RNAP, when it is trapped or immobilized on tightly supercoiled DNA. Does not activate transcription on linear DNA. Probably not involved in DNA repair. The polypeptide is RNA polymerase-associated protein RapA (Salmonella typhimurium (strain LT2 / SGSC1412 / ATCC 700720)).